We begin with the raw amino-acid sequence, 383 residues long: Lipid-A-disaccharide synthase (383 aa).

Belongs to the LpxB family.

It carries out the reaction 2-N,3-O-bis[(3R)-3-hydroxytetradecanoyl]-alpha-D-glucosaminyl 1-phosphate + UDP-2-N,3-O-bis[(3R)-3-hydroxytetradecanoyl]-alpha-D-glucosamine = lipid A disaccharide (E. coli) + UDP + H(+). It catalyses the reaction a lipid X + a UDP-2-N,3-O-bis[(3R)-3-hydroxyacyl]-alpha-D-glucosamine = a lipid A disaccharide + UDP + H(+). It functions in the pathway glycolipid biosynthesis; lipid IV(A) biosynthesis; lipid IV(A) from (3R)-3-hydroxytetradecanoyl-[acyl-carrier-protein] and UDP-N-acetyl-alpha-D-glucosamine: step 5/6. In terms of biological role, condensation of UDP-2,3-diacylglucosamine and 2,3-diacylglucosamine-1-phosphate to form lipid A disaccharide, a precursor of lipid A, a phosphorylated glycolipid that anchors the lipopolysaccharide to the outer membrane of the cell. This Klebsiella pneumoniae (strain 342) protein is Lipid-A-disaccharide synthase.